We begin with the raw amino-acid sequence, 537 residues long: Intercellular adhesion molecule 1 (537 aa).

Positions 1–27 are cleaved as a signal peptide; sequence MASTRAKPTLPLLLALVTVVIPGPGDA. Over 28–485 the chain is Extracellular; that stretch reads QVSIHPREAF…LTVLYHSQNN (458 aa). Ig-like C2-type domains follow at residues 41–102 and 127–195; these read GGSV…QSSA and GKDL…LDLR. N-linked (GlcNAc...) asparagine glycosylation is present at N47. Cystine bridges form between C48–C91, C52–C95, and C134–C188. A Cell attachment site; atypical motif is present at residues 151–153; the sequence is RGE. The Cell attachment site signature appears at 179-181; the sequence is RGD. N-linked (GlcNAc...) asparagine glycans are attached at residues N185, N204, N267, N311, N362, N388, N409, N456, and N469. The Ig-like C2-type 3 domain occupies 232–299; the sequence is GTQQKLFCSL…LRCVLELADQ (68 aa). A disulfide bond links C239 and C292. The 55-residue stretch at 327 to 381 folds into the Ig-like C2-type 4 domain; that stretch reads GSQVTVKCEAHSGSKVVLLSGVEPRPPTPQVQFTLNASSEDHKRSFFCSAALEVA. C334 and C374 are joined by a disulfide. Cystine bridges form between C406–C422, C422–C461, and C434–C461. The 54-residue stretch at 415-468 folds into the Ig-like C2-type 5 domain; it reads GSQQTLKCQAWGNPSPKMTCRRKADGALLPIGVVKSVKQEMNGTYVCHAFSSHG. The helical transmembrane segment at 486 to 509 threads the bilayer; the sequence is WTIIILVPVLLVIVGLVMAASYVY. Residues 510–537 are Cytoplasmic-facing; sequence NRQRKIRIYKLQKAQEEAIKLKGQAPPP.

This sequence belongs to the immunoglobulin superfamily. ICAM family. In terms of assembly, homodimer. Interacts with MUC1 and promotes cell aggregation in epithelial cells. Interacts with ARHGEF26/SGEF. Interacts (on T cell side) with CD81, CD247 and CD9 at immunological synapses between antigen-presenting cells and T cells. In terms of processing, monoubiquitinated, which is promoted by MARCH9 and leads to endocytosis. Expressed at low level on a subpopulation of lymphocytes, macrophages, and endothelial cells, but is strongly induced on these cells, and on fibroblasts and epithelial cells.

Its subcellular location is the membrane. In terms of biological role, ICAM proteins are ligands for the leukocyte adhesion protein LFA-1 (integrin alpha-L/beta-2). During leukocyte trans-endothelial migration, ICAM1 engagement promotes the assembly of endothelial apical cups through ARHGEF26/SGEF and RHOG activation. The chain is Intercellular adhesion molecule 1 (Icam1) from Mus musculus (Mouse).